Reading from the N-terminus, the 454-residue chain is UDP-N-acetylmuramoylalanine--D-glutamate ligase (454 aa).

G114–T120 contributes to the ATP binding site.

The protein belongs to the MurCDEF family.

It is found in the cytoplasm. The catalysed reaction is UDP-N-acetyl-alpha-D-muramoyl-L-alanine + D-glutamate + ATP = UDP-N-acetyl-alpha-D-muramoyl-L-alanyl-D-glutamate + ADP + phosphate + H(+). Its pathway is cell wall biogenesis; peptidoglycan biosynthesis. Its function is as follows. Cell wall formation. Catalyzes the addition of glutamate to the nucleotide precursor UDP-N-acetylmuramoyl-L-alanine (UMA). The sequence is that of UDP-N-acetylmuramoylalanine--D-glutamate ligase from Desulfitobacterium hafniense (strain DSM 10664 / DCB-2).